The following is a 392-amino-acid chain: MSSSRIPQCENSSRLSLSSIFRYFGTTSTIATMSPKKVTIIGSGNWGSAIARIVGSTTKSFPDEFDPTVRMWVFEEIVNGEKLSEVINNRHENIKYLPGKVLPNNVVAVTDLVESCEGSNVLVFVVPHQFVKGICEKLVGKIPADTQAISLIKGISFDKTNQGVSTEKRGGLKLISEEIKEILKIEVSVLMGANLAPEVANDNFCEATIGCKRKAEDGPLLKKLFHTDNFRINVVEDAHTVELCGALKNVVACAAGFTDGLGYGDNTKAAVIRLGLMETTKFVEHYYPGSNLQTFFESCGIADLITTCYGGRNRKVCEAFVKTGKSMAEVEKELLNGQSAQGPLTAEEVYLMMHKTGLDAKFPLFTAVHKICAGEMKPAELVDCLRNHPEHM.

NAD(+)-binding positions include 42–47 (GSGNWG), F130, K153, and A196. Substrate is bound at residue K153. K248 functions as the Proton acceptor in the catalytic mechanism. NAD(+) is bound by residues R312 and Q341. 312-313 (RN) lines the substrate pocket.

The protein belongs to the NAD-dependent glycerol-3-phosphate dehydrogenase family. Homodimer.

It localises to the cytoplasm. The enzyme catalyses sn-glycerol 3-phosphate + NAD(+) = dihydroxyacetone phosphate + NADH + H(+). The sequence is that of Probable glycerol-3-phosphate dehydrogenase 2 (gpdh-2) from Caenorhabditis elegans.